We begin with the raw amino-acid sequence, 398 residues long: Phosphomevalonate dehydratase large subunit (398 aa).

The (R)-5-phosphomevalonate site is built by G48, V49, S50, N76, and P77. C116 contacts [4Fe-4S] cluster. E136 and S137 together coordinate (R)-5-phosphomevalonate. [4Fe-4S] cluster-binding residues include C287 and C342. Residue K361 participates in (R)-5-phosphomevalonate binding.

The protein belongs to the AcnX type II large subunit family. Heterodimer composed of a large subunit (PMDh-L) and a small subunit (PMDh-S). [4Fe-4S] cluster serves as cofactor.

It carries out the reaction (R)-5-phosphomevalonate = (2E)-3-methyl-5-phosphooxypent-2-enoate + H2O. It functions in the pathway isoprenoid biosynthesis; isopentenyl diphosphate biosynthesis via mevalonate pathway. Component of a hydro-lyase that catalyzes the dehydration of mevalonate 5-phosphate (MVA5P) to form trans-anhydromevalonate 5-phosphate (tAHMP). Involved in the archaeal mevalonate (MVA) pathway, which provides fundamental precursors for isoprenoid biosynthesis, such as isopentenyl diphosphate (IPP) and dimethylallyl diphosphate (DMAPP). The sequence is that of Phosphomevalonate dehydratase large subunit from Methanosarcina mazei (strain ATCC BAA-159 / DSM 3647 / Goe1 / Go1 / JCM 11833 / OCM 88) (Methanosarcina frisia).